The following is a 312-amino-acid chain: Olfactory receptor 2L2 (312 aa).

The Extracellular portion of the chain corresponds to 1–24 (MENYNQTSTDFILLGLFPQSRIGL). Asn-5 is a glycosylation site (N-linked (GlcNAc...) asparagine). The chain crosses the membrane as a helical span at residues 25–48 (FVFTLIFLIFLMALIGNLSMILLI). Residues 49-56 (FLDIHLHT) lie on the Cytoplasmic side of the membrane. The helical transmembrane segment at 57–78 (PMYFLLSQLSLIDLNYISTIVP) threads the bilayer. The Extracellular portion of the chain corresponds to 79–99 (KMVYDFLYGNKSISFTGCGIQ). An N-linked (GlcNAc...) asparagine glycan is attached at Asn-88. Cys-96 and Cys-188 are disulfide-bonded. Residues 100-119 (SFFFLTLAVAEGLLLTSMAY) form a helical membrane-spanning segment. The Cytoplasmic portion of the chain corresponds to 120 to 138 (DRYVAICFPLHYPIRISKR). A helical membrane pass occupies residues 139 to 157 (VCVMMITGSWMISSINSCA). The Extracellular segment spans residues 158–194 (HTVYALCIPYCKSRAINHFFCDVPAMLTLACTDTWVY). The helical transmembrane segment at 195–218 (ESTVFLSSTIFLVLPFTGIACSYG) threads the bilayer. Residues 219-235 (RVLLAVYRMHSAEGRKK) lie on the Cytoplasmic side of the membrane. The helical transmembrane segment at 236–258 (AYSTCSTHLTVVSFYYAPFAYTY) threads the bilayer. At 259 to 271 (VRPRSLRSPTEDK) the chain is on the extracellular side. The chain crosses the membrane as a helical span at residues 272 to 291 (ILAVFYTILTPMLNPIIYSL). Residues 292–312 (RNKEVMGALTQVIQKIFSVKM) lie on the Cytoplasmic side of the membrane.

The protein belongs to the G-protein coupled receptor 1 family.

The protein resides in the cell membrane. Odorant receptor. This Homo sapiens (Human) protein is Olfactory receptor 2L2 (OR2L2).